The chain runs to 411 residues: Flagellum-associated coiled-coil domain-containing protein 1 (411 aa).

The disordered stretch occupies residues 52–77; that stretch reads SQPAKSTAFPRDKAQSRKLEESNKAP. Over residues 61-74 the composition is skewed to basic and acidic residues; that stretch reads PRDKAQSRKLEESN. Coiled-coil stretches lie at residues 124 to 220 and 278 to 328; these read SDII…LKNM and NESF…VVLE. The residue at position 353 (Lys-353) is an N6-acetyllysine. A coiled-coil region spans residues 355 to 385; the sequence is FQTKLAEAEEKYKSTIQVLTEENNSLRQKVL.

Its subcellular location is the cytoplasm. It localises to the cytoplasmic granule. It is found in the cell projection. The protein localises to the cilium. The protein resides in the flagellum. This chain is Flagellum-associated coiled-coil domain-containing protein 1, found in Rattus norvegicus (Rat).